The chain runs to 306 residues: Protein-methionine-sulfoxide reductase catalytic subunit MsrP (306 aa).

A signal peptide (tat-type signal) is located at residues 1-45 (MLIRHAPDLTDNDVTDHSLYLKRRTLMAGVAGLGVAGASASHAQA). Residues Asn-69, 72–73 (YE), Cys-127, Thr-162, Asn-210, Arg-215, and 226–228 (GIK) each bind Mo-molybdopterin.

Belongs to the MsrP family. Heterodimer of a catalytic subunit (MsrP) and a heme-binding subunit (MsrQ). Mo-molybdopterin serves as cofactor. In terms of processing, predicted to be exported by the Tat system. The position of the signal peptide cleavage has not been experimentally proven.

Its subcellular location is the periplasm. It carries out the reaction L-methionyl-[protein] + a quinone + H2O = L-methionyl-(S)-S-oxide-[protein] + a quinol. It catalyses the reaction L-methionyl-[protein] + a quinone + H2O = L-methionyl-(R)-S-oxide-[protein] + a quinol. Functionally, part of the MsrPQ system that repairs oxidized periplasmic proteins containing methionine sulfoxide residues (Met-O), using respiratory chain electrons. Thus protects these proteins from oxidative-stress damage caused by reactive species of oxygen and chlorine generated by the host defense mechanisms. MsrPQ is essential for the maintenance of envelope integrity under bleach stress, rescuing a wide series of structurally unrelated periplasmic proteins from methionine oxidation. The catalytic subunit MsrP is non-stereospecific, being able to reduce both (R-) and (S-) diastereoisomers of methionine sulfoxide. This Caulobacter vibrioides (strain ATCC 19089 / CIP 103742 / CB 15) (Caulobacter crescentus) protein is Protein-methionine-sulfoxide reductase catalytic subunit MsrP.